Consider the following 226-residue polypeptide: Probable transcriptional regulator RABBIT EARS (226 aa).

The C2H2-type zinc-finger motif lies at 55–77 (YSCSFCGREFKSAQALGGHMNVH). The tract at residues 80–102 (DRARLKQQSLSPSSTDQATPPEC) is disordered. Over residues 85–97 (KQQSLSPSSTDQA) the composition is skewed to polar residues. The EAR-like (transcriptional repression) signature appears at 212–216 (LDLEL).

As to expression, strongly expressed in inflorescences and flowers, and weakly in siliques, seedlings and roots. In flowers, it is expressed in petal primordia and their precursor cells. Also expressed in the lateral root caps and the basal cells of lateral roots.

The protein resides in the nucleus. Functionally, probable transcriptional regulator essential for petal development. Required for the early development of the organ primordia of the second whorl. Acts downstream of AP1 and PTL. In Arabidopsis thaliana (Mouse-ear cress), this protein is Probable transcriptional regulator RABBIT EARS (RBE).